Reading from the N-terminus, the 189-residue chain is Large ribosomal subunit protein bL9 (189 aa).

Belongs to the bacterial ribosomal protein bL9 family.

Binds to the 23S rRNA. The polypeptide is Large ribosomal subunit protein bL9 (Cereibacter sphaeroides (strain ATCC 17025 / ATH 2.4.3) (Rhodobacter sphaeroides)).